Here is a 542-residue protein sequence, read N- to C-terminus: Nuclear speckle splicing regulatory protein 1 (542 aa).

The disordered stretch occupies residues 21-53 (RVLQKPSVFGSDSDDDETSVSESLQREAAKKQA). Phosphoserine is present on residues Ser27, Ser31, and Ser33. Positions 103-172 (IHNLLKAVEI…RAAALEAHLD (70 aa)) form a coiled coil. Residues 105 to 169 (NLLKAVEIRK…REKRAAALEA (65 aa)) form a necessary for alternative splicing activity region. The disordered stretch occupies residues 190-516 (AVGEEAAPKS…FAKRSNEETV (327 aa)). Glycyl lysine isopeptide (Lys-Gly) (interchain with G-Cter in SUMO2) cross-links involve residues Lys198 and Lys209. A compositionally biased stretch (basic and acidic residues) spans 200-217 (SFREARTVIKEEKLRGYP). The segment covering 223–232 (ESRPPQQSCV) has biased composition (polar residues). Residues 239–256 (EAEENPDADREFDDESSE) show a composition bias toward acidic residues. Residues Ser254 and Ser255 each carry the phosphoserine modification. Over residues 257–271 (DGEKRDHKVKSRGED) the composition is skewed to basic and acidic residues. Lys277 carries the N6-acetyllysine modification. Positions 277–288 (KHPKHHKNRAHS) are enriched in basic residues. A Glycyl lysine isopeptide (Lys-Gly) (interchain with G-Cter in SUMO2) cross-link involves residue Lys280. 3 stretches are compositionally biased toward basic and acidic residues: residues 309–335 (RGHE…EEKS), 343–475 (SHKD…KPSH), and 485–501 (RLAE…ERPP). A coiled-coil region spans residues 372–413 (KREKYSSREQERDRQRNDHDRYSEKEKKRKEKEEHTKARRER). The residue at position 443 (Ser443) is a Phosphoserine.

Belongs to the NSRP1 family. In terms of assembly, interacts (via C-terminus) with SRSF1. Interacts (via C-terminus) with SRSF2.

It localises to the nucleus. The protein resides in the nucleus speckle. In terms of biological role, RNA-binding protein that mediates pre-mRNA alternative splicing regulation. In Mus musculus (Mouse), this protein is Nuclear speckle splicing regulatory protein 1 (Nsrp1).